We begin with the raw amino-acid sequence, 746 residues long: Methyl-CpG-binding domain-containing protein 13 (746 aa).

2 short sequence motifs (nuclear localization signal) span residues 13–20 (ERKVEIRV) and 44–51 (IKKLEITN). The region spanning 29-104 (VIVEKSAAQG…KESDIEDDDS (76 aa)) is the MBD domain. 6 disordered regions span residues 131 to 157 (IDDV…MTSD), 169 to 283 (LGKK…PTPE), 295 to 328 (PLDD…KTRT), 348 to 479 (TKVQ…LKSP), 518 to 562 (TAAG…SGSA), and 696 to 746 (EPDT…FSKD). Over residues 169-180 (LGKKEEVKDPIE) the composition is skewed to basic and acidic residues. Polar residues predominate over residues 190–199 (RSQTKASTTE). Positions 244-260 (SSEKRITRSKVEEKKNE) are enriched in basic and acidic residues. The Nuclear localization signal motif lies at 256-263 (EKKNELSN). The span at 427–451 (VAQSCNEQSSQKPHAAAATSNNRVS) shows a compositional bias: polar residues. Residues 465–476 (VGRKPSKDKKTL) show a composition bias toward basic residues. 2 stretches are compositionally biased toward polar residues: residues 529-546 (PKAN…SPLR) and 702-730 (KSQG…TNKT). Residues 732–746 (GKPDDLRFTQSFSKD) are compositionally biased toward basic and acidic residues.

The protein resides in the nucleus. Functionally, probable transcriptional regulator. This chain is Methyl-CpG-binding domain-containing protein 13 (MBD13), found in Arabidopsis thaliana (Mouse-ear cress).